Here is a 680-residue protein sequence, read N- to C-terminus: DNA ligase (680 aa).

Residues Asp35 to Asp39, Ser86 to Leu87, and Glu111 contribute to the NAD(+) site. Lys113 functions as the N6-AMP-lysine intermediate in the catalytic mechanism. NAD(+) contacts are provided by Arg134, Glu174, Lys290, and Lys314. Residues Cys408, Cys411, Cys427, and Cys433 each coordinate Zn(2+). Positions Val597–Glu680 constitute a BRCT domain.

The protein belongs to the NAD-dependent DNA ligase family. LigA subfamily. Requires Mg(2+) as cofactor. Mn(2+) serves as cofactor.

The catalysed reaction is NAD(+) + (deoxyribonucleotide)n-3'-hydroxyl + 5'-phospho-(deoxyribonucleotide)m = (deoxyribonucleotide)n+m + AMP + beta-nicotinamide D-nucleotide.. In terms of biological role, DNA ligase that catalyzes the formation of phosphodiester linkages between 5'-phosphoryl and 3'-hydroxyl groups in double-stranded DNA using NAD as a coenzyme and as the energy source for the reaction. It is essential for DNA replication and repair of damaged DNA. The protein is DNA ligase of Corynebacterium glutamicum (strain ATCC 13032 / DSM 20300 / JCM 1318 / BCRC 11384 / CCUG 27702 / LMG 3730 / NBRC 12168 / NCIMB 10025 / NRRL B-2784 / 534).